A 104-amino-acid chain; its full sequence is UPF0473 protein SH1304 (104 aa).

Belongs to the UPF0473 family.

The polypeptide is UPF0473 protein SH1304 (Staphylococcus haemolyticus (strain JCSC1435)).